Consider the following 527-residue polypeptide: Lysine--tRNA ligase (527 aa).

The short motif at 44 to 52 (PSGLPHIGT) is the 'HIGH' region element. Positions 290–294 (KISKS) match the 'KMSKS' region motif. Position 293 (Lys-293) interacts with ATP.

The protein belongs to the class-I aminoacyl-tRNA synthetase family.

The protein localises to the cytoplasm. It carries out the reaction tRNA(Lys) + L-lysine + ATP = L-lysyl-tRNA(Lys) + AMP + diphosphate. In Roseobacter denitrificans (strain ATCC 33942 / OCh 114) (Erythrobacter sp. (strain OCh 114)), this protein is Lysine--tRNA ligase.